A 134-amino-acid polypeptide reads, in one-letter code: MKPSERRKARRLAVQAIYSWQLSGNNIADVEHEFLTEQSLDGVDVAYFRELFSGVATKKTQLDELIIPHLERPIDEVSPVEKAIVRLATYELTFRKDVPYKVAINEAIELAKAFGADESHKFVNGLLDKLVARK.

The protein belongs to the NusB family.

Its function is as follows. Involved in transcription antitermination. Required for transcription of ribosomal RNA (rRNA) genes. Binds specifically to the boxA antiterminator sequence of the ribosomal RNA (rrn) operons. The protein is Transcription antitermination protein NusB of Shewanella baltica (strain OS223).